Consider the following 100-residue polypeptide: Small ribosomal subunit protein uS14c (100 aa).

The tract at residues 1 to 31 (MAKKSLIQREKKRQKLEQKYHSIRRSSKKEI) is disordered.

This sequence belongs to the universal ribosomal protein uS14 family. Part of the 30S ribosomal subunit.

It is found in the plastid. Its subcellular location is the chloroplast. In terms of biological role, binds 16S rRNA, required for the assembly of 30S particles. This Atropa belladonna (Belladonna) protein is Small ribosomal subunit protein uS14c.